The primary structure comprises 202 residues: Outer-membrane lipoprotein carrier protein (202 aa).

An N-terminal signal peptide occupies residues 1-18 (MNRLFLILLLIFSHEVFS).

Belongs to the LolA family. As to quaternary structure, monomer.

It is found in the periplasm. Functionally, participates in the translocation of lipoproteins from the inner membrane to the outer membrane. Only forms a complex with a lipoprotein if the residue after the N-terminal Cys is not an aspartate (The Asp acts as a targeting signal to indicate that the lipoprotein should stay in the inner membrane). The sequence is that of Outer-membrane lipoprotein carrier protein from Legionella pneumophila (strain Lens).